Reading from the N-terminus, the 212-residue chain is Ras-related protein Rab-2A (212 aa).

Alanine 2 is subject to N-acetylalanine. The interval 2-19 (AYAYLFKYIIIGDTGVGK) is required for interaction with PRKCI. 7 residues coordinate GTP: glycine 16, valine 17, glycine 18, lysine 19, serine 20, cysteine 21, and threonine 38. Serine 20 provides a ligand contact to Mg(2+). The Switch 1 motif lies at 37 to 42 (LTIGVE). Mg(2+) contacts are provided by threonine 38 and aspartate 61. Positions 63-72 (AGQESFRSIT) match the Switch 2 motif. The GTP site is built by glycine 64, asparagine 119, lysine 120, aspartate 122, alanine 150, and lysine 151. S-geranylgeranyl cysteine attachment occurs at residues cysteine 211 and cysteine 212.

The protein belongs to the small GTPase superfamily. Rab family. Interacts with PRKCI. Interacts with TRIP11. Interacts (in GTP-bound form) with GARIN1B. Interacts (GTP-bound) with HOPS complex component VPS39; interaction contributes to obtaining a functional HOPS complex that promotes autophagosome-lysosome membrane fusion driven by STX17-SNAP29-VAMP8. May interact with VPS41. It depends on Mg(2+) as a cofactor. Prenylated. Prenylation is required for association with cellular membranes.

It is found in the endoplasmic reticulum-Golgi intermediate compartment membrane. It localises to the melanosome. The protein localises to the endoplasmic reticulum membrane. The protein resides in the golgi apparatus membrane. Its subcellular location is the cytoplasmic vesicle. It is found in the secretory vesicle. It localises to the acrosome. The protein localises to the autophagosome membrane. It carries out the reaction GTP + H2O = GDP + phosphate + H(+). Its activity is regulated as follows. Regulated by guanine nucleotide exchange factors (GEFs) which promote the exchange of bound GDP for free GTP, GTPase activating proteins (GAPs) which increase the GTP hydrolysis activity, and GDP dissociation inhibitors (GDIs) which inhibit the dissociation of the nucleotide from the GTPase. The small GTPases Rab are key regulators of intracellular membrane trafficking, from the formation of transport vesicles to their fusion with membranes. Rabs cycle between active GTP-bound and inactive GDP-bound states. In their active state, drive transport of vesicular carriers from donor organelles to acceptor organelles to regulate the membrane traffic that maintains organelle identity and morphology. RAB2A regulates autophagy by promoting autophagosome-lysosome fusion via recruitment of the HOPS endosomal tethering complex; this process involves autophagosomal RAB2A and lysosomal RAB39A recruitment of HOPS subcomplexes VPS39-VPS11 and VPS41-VPS16-VPS18-VPS33A, respectively, which assemble into a functional complex to mediate membrane tethering and SNAREs-driven membrane fusion. Required for protein transport from the endoplasmic reticulum to the Golgi complex. Regulates the compacted morphology of the Golgi. Together with RAB2B, redundantly required for efficient autophagic flux. The sequence is that of Ras-related protein Rab-2A (RAB2A) from Canis lupus familiaris (Dog).